The sequence spans 674 residues: 1,4-alpha-glucan branching enzyme GlgB 1 (674 aa).

The active-site Nucleophile is the D336. The active-site Proton donor is the E389.

It belongs to the glycosyl hydrolase 13 family. GlgB subfamily. Monomer.

It catalyses the reaction Transfers a segment of a (1-&gt;4)-alpha-D-glucan chain to a primary hydroxy group in a similar glucan chain.. The protein operates within glycan biosynthesis; glycogen biosynthesis. In terms of biological role, catalyzes the formation of the alpha-1,6-glucosidic linkages in glycogen by scission of a 1,4-alpha-linked oligosaccharide from growing alpha-1,4-glucan chains and the subsequent attachment of the oligosaccharide to the alpha-1,6 position. The polypeptide is 1,4-alpha-glucan branching enzyme GlgB 1 (glgB1) (Clostridium perfringens (strain 13 / Type A)).